A 279-amino-acid chain; its full sequence is MDFSPSSELGFHFVAFILLTRHRTAFPASGKKRETDYSDGDPLDVHKRLPSSAGEDRAVMLGFAMMGFSVLMFFLLGTTILKPFMLSIQREESTCTAIHTDIMDDWLDCAFTCGVHCHGQGKYPCLQVFVNLSHPGQKALLHYNEEAVQINPKCFYTPKCHQDRNDLLNSALDIKEFFDHKNGTPFSCFYSPASQSEDVILIKKYDQMAIFHCLFWPSLTLLGGALIVGMVRLTQHLSLLCEKYSTVVRDEVGGKVPYIEQHQFKLCIMRRSKGRAEKS.

The Cytoplasmic portion of the chain corresponds to 1 to 60 (MDFSPSSELGFHFVAFILLTRHRTAFPASGKKRETDYSDGDPLDVHKRLPSSAGEDRAVM). A helical membrane pass occupies residues 61–81 (LGFAMMGFSVLMFFLLGTTIL). The Extracellular portion of the chain corresponds to 82–207 (KPFMLSIQRE…DVILIKKYDQ (126 aa)). A glycan (N-linked (GlcNAc...) asparagine) is linked at Asn-131. A helical membrane pass occupies residues 208 to 228 (MAIFHCLFWPSLTLLGGALIV). Topologically, residues 229-279 (GMVRLTQHLSLLCEKYSTVVRDEVGGKVPYIEQHQFKLCIMRRSKGRAEKS) are cytoplasmic.

Belongs to the KCNMB (TC 8.A.14.1) family. KCNMB3 subfamily. As to quaternary structure, interacts with KCNMA1 tetramer. There are probably 4 molecules of KCMNB3 per KCNMA1 tetramer. Post-translationally, N-glycosylated. The extracellular domain contains disulfide bond essential for the gating mechanism. Isoform 1, isoform 3 and isoform 4 are widely expressed. Isoform 2 is expressed placenta, pancreas, kidney and heart. Isoform 1 and isoform 3 are highly expressed in pancreas and testis.

The protein localises to the membrane. Its function is as follows. Regulatory subunit of the calcium activated potassium KCNMA1 (maxiK) channel. Modulates the calcium sensitivity and gating kinetics of KCNMA1, thereby contributing to KCNMA1 channel diversity. Alters the functional properties of the current expressed by the KCNMA1 channel. Isoform 2, isoform 3 and isoform 4 partially inactivate the current of KCNBMA. Isoform 4 induces a fast and incomplete inactivation of KCNMA1 channel that is detectable only at large depolarizations. In contrast, isoform 1 does not induce detectable inactivation of KCNMA1. Two or more subunits of KCNMB3 are required to block the KCNMA1 tetramer. This is Calcium-activated potassium channel subunit beta-3 (KCNMB3) from Homo sapiens (Human).